The primary structure comprises 104 residues: Naphthalene 1,2-dioxygenase system, ferredoxin component (104 aa).

Positions 6–101 (IDAVALYEIP…VKIEGQRVMI (96 aa)) constitute a Rieske domain. Positions 45, 47, 64, and 67 each coordinate [2Fe-2S] cluster.

This sequence belongs to the bacterial ring-hydroxylating dioxygenase ferredoxin component family. As to quaternary structure, the naphthalene dioxygenase (NDO) multicomponent enzyme system is composed of an electron transfer component and a dioxygenase component (iron sulfur protein (ISP)). The electron transfer component is composed of a ferredoxin reductase (NdoR) and a ferredoxin (NdoA), and the dioxygenase component is formed of a heterohexamer (trimer of heterodimers) of three large alpha subunits (NdoB) and three small beta subunits (NdoC). Requires [2Fe-2S] cluster as cofactor.

It participates in aromatic compound metabolism; naphthalene degradation. Its function is as follows. Component of the naphthalene dioxygenase (NDO) multicomponent enzyme system which catalyzes the incorporation of both atoms of molecular oxygen into naphthalene to form cis-(1R,2S)-dihydroxy-1,2-dihydronaphthalene. Functions as an intermediate electron transfer protein via a specific interaction with iron sulfur protein components (ISP) (NdoB and NdoC). The polypeptide is Naphthalene 1,2-dioxygenase system, ferredoxin component (Pseudomonas aeruginosa).